Consider the following 135-residue polypeptide: Ribosomal RNA large subunit methyltransferase H (135 aa).

S-adenosyl-L-methionine contacts are provided by residues leucine 52, glycine 83, and leucine 102 to leucine 107.

Belongs to the RNA methyltransferase RlmH family. In terms of assembly, homodimer.

It is found in the cytoplasm. The catalysed reaction is pseudouridine(1915) in 23S rRNA + S-adenosyl-L-methionine = N(3)-methylpseudouridine(1915) in 23S rRNA + S-adenosyl-L-homocysteine + H(+). Specifically methylates the pseudouridine at position 1915 (m3Psi1915) in 23S rRNA. The sequence is that of Ribosomal RNA large subunit methyltransferase H from Polynucleobacter necessarius subsp. necessarius (strain STIR1).